A 330-amino-acid chain; its full sequence is Biotin synthase 2 (330 aa).

The region spanning 48-278 (MCGDGFDMCS…QAAIRLAGGR (231 aa)) is the Radical SAM core domain. The [4Fe-4S] cluster site is built by cysteine 66, cysteine 70, and cysteine 73. Serine 111, cysteine 143, cysteine 203, and arginine 273 together coordinate [2Fe-2S] cluster.

The protein belongs to the radical SAM superfamily. Biotin synthase family. As to quaternary structure, homodimer. It depends on [4Fe-4S] cluster as a cofactor. The cofactor is [2Fe-2S] cluster.

The catalysed reaction is (4R,5S)-dethiobiotin + (sulfur carrier)-SH + 2 reduced [2Fe-2S]-[ferredoxin] + 2 S-adenosyl-L-methionine = (sulfur carrier)-H + biotin + 2 5'-deoxyadenosine + 2 L-methionine + 2 oxidized [2Fe-2S]-[ferredoxin]. It functions in the pathway cofactor biosynthesis; biotin biosynthesis; biotin from 7,8-diaminononanoate: step 2/2. Its function is as follows. Catalyzes the conversion of dethiobiotin (DTB) to biotin by the insertion of a sulfur atom into dethiobiotin via a radical-based mechanism. The sequence is that of Biotin synthase 2 from Corynebacterium diphtheriae (strain ATCC 700971 / NCTC 13129 / Biotype gravis).